The chain runs to 147 residues: NAD(P)H-quinone oxidoreductase subunit N (147 aa).

Belongs to the complex I NdhN subunit family. As to quaternary structure, NDH-1 can be composed of about 15 different subunits; different subcomplexes with different compositions have been identified which probably have different functions.

Its subcellular location is the cellular thylakoid membrane. It carries out the reaction a plastoquinone + NADH + (n+1) H(+)(in) = a plastoquinol + NAD(+) + n H(+)(out). The catalysed reaction is a plastoquinone + NADPH + (n+1) H(+)(in) = a plastoquinol + NADP(+) + n H(+)(out). Its function is as follows. NDH-1 shuttles electrons from an unknown electron donor, via FMN and iron-sulfur (Fe-S) centers, to quinones in the respiratory and/or the photosynthetic chain. The immediate electron acceptor for the enzyme in this species is believed to be plastoquinone. Couples the redox reaction to proton translocation, and thus conserves the redox energy in a proton gradient. Cyanobacterial NDH-1 also plays a role in inorganic carbon-concentration. This is NAD(P)H-quinone oxidoreductase subunit N from Synechococcus sp. (strain JA-2-3B'a(2-13)) (Cyanobacteria bacterium Yellowstone B-Prime).